A 71-amino-acid chain; its full sequence is MPVIKVRENEPFDVALRRFKRSCEKAGVLAEVRRREFYEKPTTERKRAKASAVKRHAKKLARENARRTRLY.

The tract at residues 43 to 71 is disordered; the sequence is TERKRAKASAVKRHAKKLARENARRTRLY. Residues 46 to 59 are compositionally biased toward basic residues; that stretch reads KRAKASAVKRHAKK. Positions 60–71 are enriched in basic and acidic residues; sequence LARENARRTRLY.

The protein belongs to the bacterial ribosomal protein bS21 family.

This is Small ribosomal subunit protein bS21 from Pectobacterium atrosepticum (strain SCRI 1043 / ATCC BAA-672) (Erwinia carotovora subsp. atroseptica).